Consider the following 544-residue polypeptide: Flagellar hook-associated protein 1 (544 aa).

Belongs to the flagella basal body rod proteins family.

The protein resides in the secreted. The protein localises to the bacterial flagellum. The polypeptide is Flagellar hook-associated protein 1 (flgK) (Buchnera aphidicola subsp. Schizaphis graminum (strain Sg)).